We begin with the raw amino-acid sequence, 213 residues long: Thiamine-phosphate synthase (213 aa).

4-amino-2-methyl-5-(diphosphooxymethyl)pyrimidine contacts are provided by residues 40-44 (QYRDK) and Asn72. Asp73 and Asp91 together coordinate Mg(2+). Thr110 contacts 4-amino-2-methyl-5-(diphosphooxymethyl)pyrimidine. 137 to 139 (SHT) provides a ligand contact to 2-[(2R,5Z)-2-carboxy-4-methylthiazol-5(2H)-ylidene]ethyl phosphate. Lys140 contacts 4-amino-2-methyl-5-(diphosphooxymethyl)pyrimidine. Gly167 is a binding site for 2-[(2R,5Z)-2-carboxy-4-methylthiazol-5(2H)-ylidene]ethyl phosphate.

The protein belongs to the thiamine-phosphate synthase family. The cofactor is Mg(2+).

It catalyses the reaction 2-[(2R,5Z)-2-carboxy-4-methylthiazol-5(2H)-ylidene]ethyl phosphate + 4-amino-2-methyl-5-(diphosphooxymethyl)pyrimidine + 2 H(+) = thiamine phosphate + CO2 + diphosphate. It carries out the reaction 2-(2-carboxy-4-methylthiazol-5-yl)ethyl phosphate + 4-amino-2-methyl-5-(diphosphooxymethyl)pyrimidine + 2 H(+) = thiamine phosphate + CO2 + diphosphate. The catalysed reaction is 4-methyl-5-(2-phosphooxyethyl)-thiazole + 4-amino-2-methyl-5-(diphosphooxymethyl)pyrimidine + H(+) = thiamine phosphate + diphosphate. Its pathway is cofactor biosynthesis; thiamine diphosphate biosynthesis; thiamine phosphate from 4-amino-2-methyl-5-diphosphomethylpyrimidine and 4-methyl-5-(2-phosphoethyl)-thiazole: step 1/1. Condenses 4-methyl-5-(beta-hydroxyethyl)thiazole monophosphate (THZ-P) and 2-methyl-4-amino-5-hydroxymethyl pyrimidine pyrophosphate (HMP-PP) to form thiamine monophosphate (TMP). The chain is Thiamine-phosphate synthase from Stutzerimonas stutzeri (strain A1501) (Pseudomonas stutzeri).